Reading from the N-terminus, the 833-residue chain is Heat shock transcription factor (833 aa).

M1 is subject to N-acetylmethionine. The span at 1–16 (MNNAANTGTTNESNVS) shows a compositional bias: polar residues. 2 disordered regions span residues 1-31 (MNNAANTGTTNESNVSDAPRIEPLPSLNDDD) and 62-92 (NPSLDPQSAASPVPSSSFFHDSRKPSTSTHL). Positions 69–80 (SAASPVPSSSFF) are enriched in low complexity. Residue T97 is modified to Phosphothreonine. Over residues 150–161 (PSSGTTNAQPRQ) the composition is skewed to polar residues. 2 disordered regions span residues 150 to 170 (PSSGTTNAQPRQTTRRYQSHK) and 277 to 309 (GSSNNHNSPSGNGNPANGSNIPLDNAAGSNNSN). The DNA-binding element occupies 170–259 (KSRPAFVNKL…SDDKWQFENE (90 aa)). Residues 260-280 (NFIRGREDLLEKIIRQKGSSN) are flexible linker. The span at 277–296 (GSSNNHNSPSGNGNPANGSN) shows a compositional bias: low complexity. The involved in trimerization stretch occupies residues 350–403 (ELEQIKYNQIAISKDLLRINKDNELLWQENMMARERHRTQQQALEKMFRFLTSI). The span at 447–457 (SNDSFINDDRN) shows a compositional bias: basic and acidic residues. A disordered region spans residues 447–493 (SNDSFINDDRNSFTNATTNARNNMSPNNDDNSIDTASTNTTNRKKNI). Residues S450, S458, S471, S478, and S528 each carry the phosphoserine modification. Over residues 458–487 (SFTNATTNARNNMSPNNDDNSIDTASTNTT) the composition is skewed to polar residues. The segment covering 542-554 (RANSSTSSENPSL) has biased composition (polar residues). Disordered stretches follow at residues 542-626 (RANS…HNES), 657-765 (GYPN…RVSP), and 778-799 (SDNLPSFNDHSYSTQADTAPEN). Residues 571–580 (PFDDEEEEET) are compositionally biased toward acidic residues. Residues 588–600 (RDPNNQTSENTFD) show a composition bias toward polar residues. Residues 610 to 626 (DDLKKDSHTNDNKHNES) show a composition bias toward basic and acidic residues. Residues 660-675 (NKSFNNKTSSTNTNSN) are compositionally biased toward low complexity. Polar residues predominate over residues 676–687 (MESAVNVNSPGF). Residues 697–713 (SNSPNSVHSVPSNGSGS) are compositionally biased toward low complexity. Composition is skewed to polar residues over residues 727-739 (ASTSVNQGENGSG), 752-763 (NDNNTSEGSTRV), and 778-794 (SDNLPSFNDHSYSTQAD).

The protein belongs to the HSF family. As to quaternary structure, homotrimer. Homotrimerization increases the affinity of HSF1 to DNA. Exhibits temperature-dependent phosphorylation that activates the transcriptional capacity.

The protein localises to the nucleus. Functionally, DNA-binding transcription factor that specifically binds heat shock promoter elements (HSE) and activates transcription. This Saccharomyces cerevisiae (strain ATCC 204508 / S288c) (Baker's yeast) protein is Heat shock transcription factor.